The chain runs to 405 residues: Angiopoietin-related protein 4 (405 aa).

Positions methionine 1–alanine 23 are cleaved as a signal peptide. Residues glycine 54–leucine 146 adopt a coiled-coil conformation. A glycan (N-linked (GlcNAc...) asparagine) is linked at asparagine 176. A Fibrinogen C-terminal domain is found at threonine 178 to glutamate 400. A disulfide bridge connects residues cysteine 187 and cysteine 215. 2 N-linked (GlcNAc...) asparagine glycosylation sites follow: asparagine 231 and asparagine 237. A disulfide bridge links cysteine 340 with cysteine 353.

As to quaternary structure, homooligomer; disulfide-linked via Cys residues in the N-terminal part of the protein. The homooligomer undergoes proteolytic processing to release its carboxyl fibrinogen-like domain, which circulates as a monomer. The homooligomer unprocessed form is able to interact with the extracellular matrix. N-glycosylated. Post-translationally, forms disulfide-linked dimers and tetramers. In terms of processing, cleaved into a smaller N-terminal chain and a larger chain that contains the fibrinogen C-terminal domain; both cleaved and uncleaved forms are detected in the extracellular space. The cleaved form is not present within the cell.

It localises to the secreted. The protein resides in the extracellular space. The protein localises to the extracellular matrix. In terms of biological role, mediates inactivation of the lipoprotein lipase LPL, and thereby plays a role in the regulation of triglyceride clearance from the blood serum and in lipid metabolism. May also play a role in regulating glucose homeostasis and insulin sensitivity. Inhibits proliferation, migration, and tubule formation of endothelial cells and reduces vascular leakage. Upon heterologous expression, inhibits the adhesion of endothelial cell to the extracellular matrix (ECM), and inhibits the reorganization of the actin cytoskeleton, formation of actin stress fibers and focal adhesions in endothelial cells that have adhered to ANGPTL4-containing ECM (in vitro). Depending on context, may modulate tumor-related angiogenesis. Functionally, mediates inactivation of the lipoprotein lipase LPL, and thereby plays an important role in the regulation of triglyceride clearance from the blood serum and in lipid metabolism. Has higher activity in LPL inactivation than the uncleaved protein. The polypeptide is Angiopoietin-related protein 4 (Angptl4) (Rattus norvegicus (Rat)).